A 548-amino-acid polypeptide reads, in one-letter code: Alpha-1,3-mannosyl-glycoprotein 4-beta-N-acetylglucosaminyltransferase B (548 aa).

Residues 1–7 (MRLRNGT) lie on the Cytoplasmic side of the membrane. The helical; Signal-anchor for type II membrane protein transmembrane segment at 8–28 (FLTLLLFCLCAFLSLSWYAAL) threads the bilayer. Over 29-548 (SGQKGDVVDI…LSEIFLKKAD (520 aa)) the chain is Lumenal. Residues 36 to 83 (VDIYQREFLALRDRLHAAEQESLKRSKELNLVLEEIKRAVSERQALRD) are a coiled coil. N-linked (GlcNAc...) asparagine glycans are attached at residues Asn-87 and Asn-103.

It belongs to the glycosyltransferase 54 family. In terms of assembly, interacts with SLC35A3. The cofactor is a divalent metal cation. Post-translationally, N-glycosylated.

The protein localises to the golgi apparatus membrane. It carries out the reaction N(4)-{beta-D-GlcNAc-(1-&gt;2)-alpha-D-Man-(1-&gt;3)-[beta-D-GlcNAc-(1-&gt;2)-alpha-D-Man-(1-&gt;6)]-beta-D-Man-(1-&gt;4)-beta-D-GlcNAc-(1-&gt;4)-beta-D-GlcNAc}-L-asparaginyl-[protein] + UDP-N-acetyl-alpha-D-glucosamine = N(4)-{beta-D-GlcNAc-(1-&gt;2)-[beta-D-GlcNAc-(1-&gt;4)]-alpha-D-Man-(1-&gt;3)-[beta-D-GlcNAc-(1-&gt;2)-alpha-D-Man-(1-&gt;6)]-beta-D-Man-(1-&gt;4)-beta-D-GlcNAc-(1-&gt;4)-beta-D-GlcNAc}-L-asparaginyl-[protein] + UDP + H(+). It catalyses the reaction an N(4)-{beta-D-GlcNAc-(1-&gt;2)-alpha-D-Man-(1-&gt;3)-[alpha-D-Man-(1-&gt;6)]-beta-D-Man-(1-&gt;4)-beta-D-GlcNAc-(1-&gt;4)-beta-D-GlcNAc}-L-asparaginyl-[protein] + UDP-N-acetyl-alpha-D-glucosamine = an N(4)-{beta-D-GlcNAc-(1-&gt;2)-[beta-D-GlcNAc-(1-&gt;4)]-alpha-D-Man-(1-&gt;3)-[alpha-D-Man-(1-&gt;6)]-beta-D-Man-(1-&gt;4)-beta-D-GlcNAc-(1-&gt;4)-beta-D-GlcNAc}-L-asparaginyl-[protein] + UDP + H(+). The enzyme catalyses an N(4)-{beta-D-GlcNAc-(1-&gt;2)-alpha-D-Man-(1-&gt;3)-[beta-D-GlcNAc-(1-&gt;2)-[beta-D-GlcNAc-(1-&gt;6)]-alpha-D-Man-(1-&gt;6)]-beta-D-Man-(1-&gt;4)-beta-D-GlcNAc-(1-&gt;4)-beta-D-GlcNAc}-L-asparaginyl-[protein] + UDP-N-acetyl-alpha-D-glucosamine = an N(4)-{beta-D-GlcNAc-(1-&gt;2)-[beta-D-GlcNAc-(1-&gt;4)]-alpha-D-Man-(1-&gt;3)-[beta-D-GlcNAc-(1-&gt;2)-[beta-D-GlcNAc-(1-&gt;6)]-alpha-D-Man-(1-&gt;6)]-beta-D-Man-(1-&gt;4)-beta-D-GlcNAc-(1-&gt;4)-beta-D-GlcNAc}-L-asparaginyl-[protein] + UDP + H(+). The catalysed reaction is an N(4)-{beta-D-GlcNAc-(1-&gt;2)-alpha-D-Man-(1-&gt;3)-[beta-D-GlcNAc-(1-&gt;2)-alpha-D-Man-(1-&gt;6)]-beta-D-Man-(1-&gt;4)-beta-D-GlcNAc-(1-&gt;4)-[alpha-L-Fuc-(1-&gt;6)]-beta-D-GlcNAc}-L-asparaginyl-[protein] + UDP-N-acetyl-alpha-D-glucosamine = N(4)-{beta-D-GlcNAc-(1-&gt;2)-[beta-D-GlcNAc-(1-&gt;4)]-alpha-D-Man-(1-&gt;3)-[beta-D-GlcNAc-(1-&gt;2)-alpha-D-Man-(1-&gt;6)]-beta-D-Man-(1-&gt;4)-beta-D-GlcNAc-(1-&gt;4)-[alpha-L-Fuc-(1-&gt;6)]-beta-D-GlcNAc}-asparaginyl-[protein] + UDP + H(+). It carries out the reaction an N(4)-{beta-D-GlcNAc-(1-&gt;2)-alpha-D-Man-(1-&gt;3)-[beta-D-Gal-(1-&gt;4)-beta-D-GlcNAc-(1-&gt;2)-alpha-D-Man-(1-&gt;6)]-beta-D-Man-(1-&gt;4)-beta-D-GlcNAc-(1-&gt;4)-beta-D-GlcNAc}-L-asparaginyl-[protein] + UDP-N-acetyl-alpha-D-glucosamine = an N(4)-{beta-D-GlcNAc-(1-&gt;2)-[beta-D-GlcNAc-(1-&gt;4)]-alpha-D-Man-(1-&gt;3)-[beta-D-Gal-(1-&gt;4)-beta-D-GlcNAc-(1-&gt;2)-alpha-D-Man-(1-&gt;6)]-beta-D-Man-(1-&gt;4)-beta-D-GlcNAc-(1-&gt;4)-beta-D-GlcNAc}-L-asparaginyl-[protein] + UDP + H(+). It catalyses the reaction N(4)-{beta-D-GlcNAc-(1-&gt;2)-alpha-D-Man-(1-&gt;3)-[alpha-D-Man-(1-&gt;3)-{alpha-D-Man-(1-&gt;6)}-alpha-D-Man-(1-&gt;6)]-beta-D-Man-(1-&gt;4)-beta-D-GlcNAc-(1-&gt;4)-beta-D-GlcNAc}-asparaginyl-[protein] + UDP-N-acetyl-alpha-D-glucosamine = N(4)-{beta-D-GlcNAc-(1-&gt;2)-[beta-D-GlcNAc-(1-&gt;4)]-alpha-D-Man-(1-&gt;3)-[alpha-D-Man-(1-&gt;3)-{alpha-D-Man-(1-&gt;6)}-alpha-D-Man-(1-&gt;6)]-beta-D-Man-(1-&gt;4)-beta-D-GlcNAc-(1-&gt;4)-beta-D-GlcNAc}-asparaginyl-[protein] + UDP + H(+). The enzyme catalyses N(4)-{beta-D-GlcNAc-(1-&gt;2)-alpha-D-Man-(1-&gt;3)-beta-D-Man-(1-&gt;4)-beta-D-GlcNAc-(1-&gt;4)-beta-D-GlcNAc}-asparaginyl-[protein] + UDP-N-acetyl-alpha-D-glucosamine = N(4)-{beta-D-GlcNAc-(1-&gt;2)-[beta-D-GlcNAc-(1-&gt;4)]-alpha-D-Man-(1-&gt;3)-beta-D-Man-(1-&gt;4)-beta-D-GlcNAc-(1-&gt;4)-beta-D-GlcNAc}-asparaginyl-[protein] + UDP + H(+). The protein operates within protein modification; protein glycosylation. Glycosyltransferase that catalyzes the transfer of GlcNAc from UDP-GlcNAc to the GlcNAcbeta1-2Manalpha1-3 arm of the core structure of N-linked glycans through a beta1-4 linkage and participates in the production of tri- and tetra-antennary N-linked sugar chains. Prefers complex-type N-glycans over hybrid-types. Has lower affinities for donors or acceptors than MGAT4A, suggesting that, under physiological conditions, it is not the main contributor in N-glycan biosynthesis. The chain is Alpha-1,3-mannosyl-glycoprotein 4-beta-N-acetylglucosaminyltransferase B from Mus musculus (Mouse).